A 143-amino-acid chain; its full sequence is Large ribosomal subunit protein uL11 (143 aa).

The protein belongs to the universal ribosomal protein uL11 family. In terms of assembly, part of the ribosomal stalk of the 50S ribosomal subunit. Interacts with L10 and the large rRNA to form the base of the stalk. L10 forms an elongated spine to which L12 dimers bind in a sequential fashion forming a multimeric L10(L12)X complex. Post-translationally, one or more lysine residues are methylated.

Forms part of the ribosomal stalk which helps the ribosome interact with GTP-bound translation factors. This chain is Large ribosomal subunit protein uL11, found in Laribacter hongkongensis (strain HLHK9).